The sequence spans 302 residues: MFWFKNVMIYRLTSPLSLESSSLEEQLRQTKFSPCSQSDISKFGWSSPLSGSELLHFSQGKQFLLVSHKEDKLLPTNVIKKETEERIAVLEEKEARKLKKTEKQAIKDDVVAMLLPRAFSKHQFTAIWLDLDAQLVYVDAGSSKRAEDTLALLRKTLGSLPVVPISFALLPSEVMTNWIAKGHTPNWLSLLEEAELKSFDTDSVIRCKRQDLESEEIAQHLQAGKFVTKLAIDWENHFSCVLNEDATLSRVKFADEVREKNDDILKEDIAQRFDADFLLMTEELKLFTQKMIEEFGGIKERI.

Belongs to the RdgC family.

It is found in the cytoplasm. The protein resides in the nucleoid. Functionally, may be involved in recombination. This Actinobacillus pleuropneumoniae serotype 7 (strain AP76) protein is Recombination-associated protein RdgC.